Reading from the N-terminus, the 180-residue chain is Protein YOP1 (180 aa).

Ser-2 carries the N-acetylserine modification. The interval 2–17 (SEYASSIHSQMKQFDT) is interaction with YIP1. At 2-35 (SEYASSIHSQMKQFDTKYSGNRILQQLENKTNLP) the chain is on the cytoplasmic side. Residues 36-55 (KSYLVAGLGFAYLLLIFINV) traverse the membrane as a helical segment. Topologically, residues 56–57 (GG) are lumenal. A helical membrane pass occupies residues 58-78 (VGEILSNFAGFVLPAYLSLVA). The Cytoplasmic segment spans residues 79–88 (LKTPTSTDDT). A helical transmembrane segment spans residues 89–105 (QLLTYWIVFSFLSVIEF). The Lumenal segment spans residues 106–108 (WSK). The helical transmembrane segment at 109 to 127 (AILYLIPFYWFLKTVFLIY) threads the bilayer. Residues 128 to 180 (IALPQTGGARMIYQKIVAPLTDRYILRDVSKTEKDEIRASVNEASKATGASVH) are Cytoplasmic-facing.

The protein belongs to the DP1 family. As to quaternary structure, oligomer. Interacts with YIP1.

It localises to the endoplasmic reticulum membrane. Its subcellular location is the golgi apparatus membrane. Functionally, required to generate and maintain the structure of the tubular endoplasmic reticulum network and the vacuole. Induces high curvature in membranes and causes membrane tubule formation. Involved in membrane/vesicle trafficking. This Saccharomyces cerevisiae (strain ATCC 204508 / S288c) (Baker's yeast) protein is Protein YOP1 (YOP1).